Consider the following 210-residue polypeptide: Regulator of G-protein signaling 17 (210 aa).

Positions 1 to 21 (MRKRQQSQNEGTQAVSQAPGN) are disordered. Residues 84-200 (NFDKMMKTPA…LNSQIYKAFV (117 aa)) enclose the RGS domain. A Phosphotyrosine modification is found at Y137.

As to quaternary structure, interacts with GNAI1 and GNAQ. Interacts with GNAZ and GNAI2. Interacts with OPRM1. Forms a complex with mu-opioid receptors and G(alpha)z/i2 subunits, including GNAZ and GNAI2; the formation of this complex results in mu-opioid receptor desensitization. Interacts with HINT1. In terms of processing, N- and O-glycosylated in synapsomal membranes. Serine phosphorylated in synapsomal membranes. Post-translationally, sumoylated with SUMO1 and SUM02 in synaptosomes. The sumoylated forms act as a scaffold for sequestering mu-opioid receptor-activated G(alpha) subunits. Desumoylated by HINT1. Detected in brain (at protein level). Highly expressed in the hypothalamus, periaqueductal gray matter, and pons-medulla. Lower levels in the thalamus, cortex and spinal cord. Weak expression in the striatum and cerebellum.

Its subcellular location is the membrane. The protein resides in the synapse. The protein localises to the synaptosome. It is found in the nucleus. It localises to the cytoplasm. Its function is as follows. Regulates G protein-coupled receptor signaling cascades, including signaling via muscarinic acetylcholine receptor CHRM2 and dopamine receptor DRD2. Inhibits signal transduction by increasing the GTPase activity of G protein alpha subunits, thereby driving them into their inactive GDP-bound form. Binds selectively to GNAZ and GNAI2 subunits, accelerates their GTPase activity and regulates their signaling activities. Negatively regulates mu-opioid receptor-mediated activation of the G-proteins. The sequence is that of Regulator of G-protein signaling 17 (Rgs17) from Mus musculus (Mouse).